Here is a 395-residue protein sequence, read N- to C-terminus: Fe(3+) ions import ATP-binding protein FbpC 2 (395 aa).

The tract at residues 1–21 is disordered; the sequence is MHIAQELADETCNSPRGAGHA. The ABC transporter domain occupies 23–264; it reads LRYPSDRRTA…PKTLFVADFI (242 aa). 66-73 serves as a coordination point for ATP; the sequence is GPSGCGKT.

This sequence belongs to the ABC transporter superfamily. Fe(3+) ion importer (TC 3.A.1.10) family. As to quaternary structure, the complex is composed of two ATP-binding proteins (FbpC), two transmembrane proteins (FbpB) and a solute-binding protein (FbpA).

Its subcellular location is the cell inner membrane. It catalyses the reaction Fe(3+)(out) + ATP + H2O = Fe(3+)(in) + ADP + phosphate + H(+). Functionally, part of the ABC transporter complex FbpABC involved in Fe(3+) ions import. Responsible for energy coupling to the transport system. The chain is Fe(3+) ions import ATP-binding protein FbpC 2 from Rhizobium meliloti (strain 1021) (Ensifer meliloti).